The sequence spans 984 residues: Mediator of RNA polymerase II transcription subunit 5 (984 aa).

Belongs to the Mediator complex subunit 5 family. As to quaternary structure, component of the Mediator complex.

The protein localises to the nucleus. In terms of biological role, component of the Mediator complex, a coactivator involved in the regulated transcription of nearly all RNA polymerase II-dependent genes. Mediator functions as a bridge to convey information from gene-specific regulatory proteins to the basal RNA polymerase II transcription machinery. Mediator is recruited to promoters by direct interactions with regulatory proteins and serves as a scaffold for the assembly of a functional preinitiation complex with RNA polymerase II and the general transcription factors. The protein is Mediator of RNA polymerase II transcription subunit 5 (NUT1) of Phaeosphaeria nodorum (strain SN15 / ATCC MYA-4574 / FGSC 10173) (Glume blotch fungus).